We begin with the raw amino-acid sequence, 781 residues long: Catalase-peroxidase (781 aa).

Positions 1–20 (MLYIYYLFKSLFFHTLFVFS) are cleaved as a signal peptide. The segment at residues 125–272 (WHSAGTYRIG…LAAVQMGLIY (148 aa)) is a cross-link (tryptophyl-tyrosyl-methioninium (Trp-Tyr) (with M-298)). The Proton acceptor role is filled by histidine 126. The tract at residues 237–256 (VHHPDEHRGAKEKAAKNSDS) is disordered. The segment at residues 272–298 (YVNPEGPDGRPDPLASARDIRETFARM) is a cross-link (tryptophyl-tyrosyl-methioninium (Tyr-Met) (with W-125)). Histidine 313 provides a ligand contact to heme b. A disordered region spans residues 317 to 336 (KTHGAAPADNVGPEPEAGEL).

The protein belongs to the peroxidase family. Peroxidase/catalase subfamily. Homodimer or homotetramer. The cofactor is heme b. Post-translationally, formation of the three residue Trp-Tyr-Met cross-link is important for the catalase, but not the peroxidase activity of the enzyme.

The enzyme catalyses H2O2 + AH2 = A + 2 H2O. It carries out the reaction 2 H2O2 = O2 + 2 H2O. Bifunctional enzyme with both catalase and broad-spectrum peroxidase activity. In Xylella fastidiosa (strain 9a5c), this protein is Catalase-peroxidase.